A 308-amino-acid polypeptide reads, in one-letter code: Serpentine receptor class V-1 (308 aa).

The next 7 helical transmembrane spans lie at 15–35 (VSTA…YILF), 46–68 (PFFR…STFF), 88–108 (VVPI…IIFI), 135–155 (LLLI…STDF), 184–204 (AMVD…AIFI), 222–242 (LALS…CSLL), and 256–276 (TMWF…LLAL).

Belongs to the nematode receptor-like protein srv family.

It is found in the membrane. The sequence is that of Serpentine receptor class V-1 (srv-1) from Caenorhabditis elegans.